The primary structure comprises 444 residues: Trimethylamine monooxygenase (444 aa).

The FAD site is built by C12, E37, Q39, L45, and W46. Positions 70 and 72 each coordinate NADP(+). Residues N72 and V125 each contribute to the FAD site. NADP(+)-binding residues include Y170, S202, S203, S205, R226, H227, and N288. Q315 and T318 together coordinate FAD. R409 is a binding site for NADP(+).

This sequence belongs to the FMO family. Homodimer. It depends on FAD as a cofactor.

The catalysed reaction is trimethylamine + NADPH + O2 = trimethylamine N-oxide + NADP(+) + H2O. Functionally, catalyzes the oxidation of trimethylamine (TMA) to produce trimethylamine N-oxide (TMAO). In vitro, has a broad substrate specificity, oxidizing many nitrogen- and sulfur-containing compounds, including dimethylamine (DMA), dimethylsulfide (DMS), dimethylsulfoxide (DMSO) and methimazole. TMA shows the highest affinity. In Pelagibacter sp. (strain HTCC7211), this protein is Trimethylamine monooxygenase.